The following is a 385-amino-acid chain: 1-deoxy-D-xylulose 5-phosphate reductoisomerase (385 aa).

Positions 10, 11, 12, 13, and 124 each coordinate NADPH. Lys125 contacts 1-deoxy-D-xylulose 5-phosphate. Glu126 contacts NADPH. Mn(2+) is bound at residue Asp150. Residues Ser151, Glu152, Ser176, and His199 each contribute to the 1-deoxy-D-xylulose 5-phosphate site. A Mn(2+)-binding site is contributed by Glu152. An NADPH-binding site is contributed by Gly205. 4 residues coordinate 1-deoxy-D-xylulose 5-phosphate: Ser212, Asn217, Lys218, and Glu221. Glu221 contacts Mn(2+).

The protein belongs to the DXR family. It depends on Mg(2+) as a cofactor. Mn(2+) is required as a cofactor.

The catalysed reaction is 2-C-methyl-D-erythritol 4-phosphate + NADP(+) = 1-deoxy-D-xylulose 5-phosphate + NADPH + H(+). It functions in the pathway isoprenoid biosynthesis; isopentenyl diphosphate biosynthesis via DXP pathway; isopentenyl diphosphate from 1-deoxy-D-xylulose 5-phosphate: step 1/6. Its function is as follows. Catalyzes the NADPH-dependent rearrangement and reduction of 1-deoxy-D-xylulose-5-phosphate (DXP) to 2-C-methyl-D-erythritol 4-phosphate (MEP). The protein is 1-deoxy-D-xylulose 5-phosphate reductoisomerase of Clostridium kluyveri (strain NBRC 12016).